The chain runs to 357 residues: MKRGSEEIKEETSPLPAKHFQRREVSIAEDIGIPIDLMVEILKKLPAKSLIKFQCVSKQWSSIIGSSRDFIDSIVTRSLSQPSRDILISFSTTLTNSLKQISSSFPLRTLDILTKNQSYTEAAIYNPTTRQSLSLPETTAGHSHVSTSFLGYDPFKNQYKVICLDNYKRRCCHVFTLGDAIRKWRKIQYNFGLYFPLLPPVCIKGTIYYQAKQYGSTYVLLCFDVISEKFDQVEAPKTMMDHRYTLINYQGKLGFMCCQNRVEIWVMKNDEKKQEWSKIFFYEMAGFEKWHIARATPSGEIVFVNRLLLSCQTLYVYYYGPKRNSMRRVEVEGTKYRRKHLVHICPVPDHVENTMRL.

Residues 27–73 (IAEDIGIPIDLMVEILKKLPAKSLIKFQCVSKQWSSIIGSSRDFIDS) enclose the F-box domain.

The chain is Putative F-box protein At5g50220 from Arabidopsis thaliana (Mouse-ear cress).